The chain runs to 83 residues: Large ribosomal subunit protein bL31B (83 aa).

Belongs to the bacterial ribosomal protein bL31 family. Type B subfamily. As to quaternary structure, part of the 50S ribosomal subunit.

In terms of biological role, binds the 23S rRNA. The chain is Large ribosomal subunit protein bL31B from Lactobacillus delbrueckii subsp. bulgaricus (strain ATCC 11842 / DSM 20081 / BCRC 10696 / JCM 1002 / NBRC 13953 / NCIMB 11778 / NCTC 12712 / WDCM 00102 / Lb 14).